The sequence spans 394 residues: T-cell acute lymphocytic leukemia protein 1 (394 aa).

Basic and acidic residues predominate over residues 1 to 17 (MSLKMMERLSTDMDGTR). The disordered stretch occupies residues 1–49 (MSLKMMERLSTDMDGTRDVASPPARQDAAEPERTVELSGVKEGAAPNSP). 7 consecutive repeat copies span residues 83-89 (TELCRAT), 94-100 (TELCRAP), 105-111 (TELCRAP), 116-122 (TELCRAP), 127-133 (TELCRPP), 149-155 (SELCRAP), and 167-173 (TELCRPP). The segment at 83–173 (TELCRATLTP…TATTELCRPP (91 aa)) is 7 X 7 AA approximate repeats of [TS]-E-L-C-R-[AP]-P. One can recognise a bHLH domain in the interval 262-314 (VRRIFTNSRERWRQQNVNGAFAELRKLIPTHPPDKKLSKNEILRLAMKYINFL). Residues 347 to 394 (LSPNSSCGSSLDGAPSPDSYSEEHDALDSKHSRNLHQAMLPIDGSGQR) form a disordered region. The segment covering 367 to 377 (SEEHDALDSKH) has biased composition (basic and acidic residues).

In terms of tissue distribution, first expressed in patches on the ventral side of the embryo in a region that will give rise to hematopoietic tissue. By late neurula stages, expressed throughout the ventral blood island region. By tailbud stages, expression extends to probable vascular progenitor cells, but is excluded from the presumptive liver anlage. Also expressed in the central nervous system at the tailbud stage.

It is found in the nucleus. Its function is as follows. Transcription factor that acts synergistically with lmo2 and gata1 to specify embryonic dorsal mesoderm to a hematopoietic fate. This chain is T-cell acute lymphocytic leukemia protein 1, found in Xenopus laevis (African clawed frog).